Reading from the N-terminus, the 149-residue chain is Small ribosomal subunit protein uS13 (149 aa).

The protein belongs to the universal ribosomal protein uS13 family. In terms of assembly, part of the 30S ribosomal subunit. Forms a loose heterodimer with protein S19. Forms two bridges to the 50S subunit in the 70S ribosome.

Functionally, located at the top of the head of the 30S subunit, it contacts several helices of the 16S rRNA. In the 70S ribosome it contacts the 23S rRNA (bridge B1a) and protein L5 of the 50S subunit (bridge B1b), connecting the 2 subunits; these bridges are implicated in subunit movement. This Thermococcus kodakarensis (strain ATCC BAA-918 / JCM 12380 / KOD1) (Pyrococcus kodakaraensis (strain KOD1)) protein is Small ribosomal subunit protein uS13.